We begin with the raw amino-acid sequence, 1406 residues long: DNA-directed RNA polymerase subunit beta' (1406 aa).

Residues Cys-70, Cys-72, Cys-85, and Cys-88 each coordinate Zn(2+). Mg(2+) is bound by residues Asp-460, Asp-462, and Asp-464. Zn(2+) is bound by residues Cys-814, Cys-888, Cys-895, and Cys-898.

The protein belongs to the RNA polymerase beta' chain family. In terms of assembly, the RNAP catalytic core consists of 2 alpha, 1 beta, 1 beta' and 1 omega subunit. When a sigma factor is associated with the core the holoenzyme is formed, which can initiate transcription. Mg(2+) serves as cofactor. Zn(2+) is required as a cofactor.

The enzyme catalyses RNA(n) + a ribonucleoside 5'-triphosphate = RNA(n+1) + diphosphate. Functionally, DNA-dependent RNA polymerase catalyzes the transcription of DNA into RNA using the four ribonucleoside triphosphates as substrates. This is DNA-directed RNA polymerase subunit beta' from Yersinia enterocolitica serotype O:8 / biotype 1B (strain NCTC 13174 / 8081).